A 455-amino-acid chain; its full sequence is Ribulose bisphosphate carboxylase large chain (455 aa).

K5 bears the N6,N6,N6-trimethyllysine mark. Substrate-binding residues include N114 and T164. Catalysis depends on K166, which acts as the Proton acceptor. A substrate-binding site is contributed by K168. Residues K192, D194, and E195 each coordinate Mg(2+). Residue K192 is modified to N6-carboxylysine. Catalysis depends on H285, which acts as the Proton acceptor. Positions 286, 318, and 370 each coordinate substrate.

It belongs to the RuBisCO large chain family. Type I subfamily. Heterohexadecamer of 8 large chains and 8 small chains; disulfide-linked. The disulfide link is formed within the large subunit homodimers. Mg(2+) is required as a cofactor. Post-translationally, the disulfide bond which can form in the large chain dimeric partners within the hexadecamer appears to be associated with oxidative stress and protein turnover.

It localises to the plastid. The protein localises to the chloroplast. It carries out the reaction 2 (2R)-3-phosphoglycerate + 2 H(+) = D-ribulose 1,5-bisphosphate + CO2 + H2O. The catalysed reaction is D-ribulose 1,5-bisphosphate + O2 = 2-phosphoglycolate + (2R)-3-phosphoglycerate + 2 H(+). RuBisCO catalyzes two reactions: the carboxylation of D-ribulose 1,5-bisphosphate, the primary event in carbon dioxide fixation, as well as the oxidative fragmentation of the pentose substrate in the photorespiration process. Both reactions occur simultaneously and in competition at the same active site. The polypeptide is Ribulose bisphosphate carboxylase large chain (Lupinus cosentinii (West Australian blue lupine)).